Consider the following 165-residue polypeptide: MSHPALTQLRALRYFKEIPALDSRLLDWLLLEDSMTKRFEQEGKRVSVTLLREAFVGPHEVAEEVALLPVESRYWLREILLCADGEPWLAGRTVVPESTLCGPELALQNLGKTPLGRYLFTSSTLTRDFIEIGRDAALWGRRSRLRLSGKPLMLTELFLPASPLY.

Substrate-binding residues include methionine 35, arginine 77, leucine 115, and glutamate 156.

This sequence belongs to the UbiC family. As to quaternary structure, monomer.

The protein localises to the cytoplasm. The catalysed reaction is chorismate = 4-hydroxybenzoate + pyruvate. It participates in cofactor biosynthesis; ubiquinone biosynthesis. Removes the pyruvyl group from chorismate, with concomitant aromatization of the ring, to provide 4-hydroxybenzoate (4HB) for the ubiquinone pathway. This Citrobacter koseri (strain ATCC BAA-895 / CDC 4225-83 / SGSC4696) protein is Chorismate pyruvate-lyase.